Here is a 162-residue protein sequence, read N- to C-terminus: Interleukin-15 (162 aa).

Residues 1–29 form the signal peptide; it reads MRILKPYLRSTSIQCYLCLLLNSHFLTEA. Residues 30–48 constitute a propeptide that is removed on maturation; the sequence is GIHVFILGCISAGLPKTEA. 2 disulfides stabilise this stretch: Cys83–Cys133 and Cys90–Cys136. N-linked (GlcNAc...) asparagine glycans are attached at residues Asn113, Asn121, and Asn127.

Belongs to the IL-15/IL-21 family.

The protein resides in the secreted. Functionally, cytokine that plays a major role in the development of inflammatory and protective immune responses to microbial invaders and parasites by modulating immune cells of both the innate and adaptive immune systems. Stimulates the proliferation of natural killer cells, T-cells and B-cells and promotes the secretion of several cytokines. In monocytes, induces the production of IL8 and monocyte chemotactic protein 1/CCL2, two chemokines that attract neutrophils and monocytes respectively to sites of infection. Unlike most cytokines, which are secreted in soluble form, IL15 is expressed in association with its high affinity IL15RA on the surface of IL15-producing cells and delivers signals to target cells that express IL2RB and IL2RG receptor subunits. Binding to its receptor triggers the phosphorylation of JAK1 and JAK3 and the recruitment and subsequent phosphorylation of signal transducer and activator of transcription-3/STAT3 and STAT5. In mast cells, induces the rapid tyrosine phosphorylation of STAT6 and thereby controls mast cell survival and release of cytokines such as IL4. This is Interleukin-15 (IL15) from Ovis aries (Sheep).